The primary structure comprises 574 residues: E3 ubiquitin-protein ligase NEURL1 (574 aa).

Over residues 1-18 the composition is skewed to polar residues; the sequence is MGNNFSSVSSLQRGNPSR. The disordered stretch occupies residues 1-53; it reads MGNNFSSVSSLQRGNPSRASRGHPQNLKDSIGGSFPVPSHRCHHKQKHCPPTL. Gly-2 is lipidated: N-myristoyl glycine. 2 consecutive NHR domains span residues 61–217 and 292–447; these read TPLL…QLLD and GDLR…RILG. The RING-type zinc finger occupies 520–560; that stretch reads ECTICYEHAVDTVIYTCGHMCLCYSCGLRLKKALHACCPIC.

In terms of assembly, interacts with CPEB3 (via N-terminal domain); the interaction increases CPEB3 ubiquitination. Interacts with DLL1. Myristoylation is a determinant of membrane targeting. As to expression, expressed in CA1 pyramidal neurons (at protein level). Expressed throughout the adult forebrain, including the cerebral cortex, amygdala, striatum, and CA1 area of the hippocampus. Expressed in sensory neurons of the olfactory epithelium, the vomeronasal organ, mammary gland and skeletal muscle.

The protein localises to the cytoplasm. Its subcellular location is the perinuclear region. The protein resides in the cell membrane. It localises to the perikaryon. It is found in the cell projection. The protein localises to the dendrite. Its subcellular location is the postsynaptic density. It catalyses the reaction S-ubiquitinyl-[E2 ubiquitin-conjugating enzyme]-L-cysteine + [acceptor protein]-L-lysine = [E2 ubiquitin-conjugating enzyme]-L-cysteine + N(6)-ubiquitinyl-[acceptor protein]-L-lysine.. It participates in protein modification; protein ubiquitination. Its function is as follows. Plays a role in hippocampal-dependent synaptic plasticity, learning and memory. Involved in the formation of spines and functional synaptic contacts by modulating the translational activity of the cytoplasmic polyadenylation element-binding protein CPEB3. Promotes ubiquitination of CPEB3, and hence induces CPEB3-dependent mRNA translation activation of glutamate receptor GRIA1 and GRIA2. Can function as an E3 ubiquitin-protein ligase to activate monoubiquitination of JAG1 (in vitro), thereby regulating the Notch pathway. Acts as a tumor suppressor; inhibits malignant cell transformation of medulloblastoma (MB) cells by inhibiting the Notch signaling pathway. In Mus musculus (Mouse), this protein is E3 ubiquitin-protein ligase NEURL1 (Neurl1).